Here is a 237-residue protein sequence, read N- to C-terminus: Glutathione S-transferase psoE (237 aa).

One can recognise a GST N-terminal domain in the interval 2–79; sequence VFGTLYTFPG…YITSQNEQTT (78 aa). Positions 37, 49, 50, 63, 64, and 99 each coordinate glutathione. Residue Lys-49 coordinates substrate. Residues 84 to 222 form the GST C-terminal domain; sequence DKKEYAEIIK…NNPPEKKPET (139 aa). Gln-108 is a binding site for substrate. The span at 208-222 shows a compositional bias: basic and acidic residues; sequence EPKLTNNPPEKKPET. Residues 208 to 237 are disordered; sequence EPKLTNNPPEKKPETVPKNGAAVAIEATQA.

The protein belongs to the GST superfamily. The cofactor is glutathione.

It functions in the pathway secondary metabolite biosynthesis. Functionally, glutathione S-transferase; part of the gene cluster that mediates the biosynthesis of pseurotin A, a competitive inhibitor of chitin synthase and an inducer of nerve-cell proliferation. The PKS-NRPS hybrid synthetase psoA is responsible for the biosynthesis of azaspirene, one of the first intermediates having the 1-oxa-7-azaspiro[4,4]-non-2-ene-4,6-dione core of pseurotin, via condensation of one acetyl-CoA, 4 malonyl-CoA, and a L-phenylalanine molecule. The dual-functional monooxygenase/methyltransferase psoF seems to be involved in the addition of the C3 methyl group onto the pseurotin scaffold. Azaspirene is then converted to synerazol through 4 steps including oxidation of C17 by the cytochrome P450 monooxygenase psoD, O-methylation of the hydroxy group of C8 by the methyltransferase psoC, and the trans-to-cis isomerization of the C13 olefin by the glutathione S-transferase psoE. The fourth step of synerazol production is performed by the dual-functional monooxygenase/methyltransferase psoF which seems to catalyze the epoxidation of the intermediate deepoxy-synerazol. Synerazol can be attacked by a water molecule nonenzymatically at two different positions to yield two diol products, pseurotin A and pseurotin D. This is Glutathione S-transferase psoE from Aspergillus fumigatus (strain ATCC MYA-4609 / CBS 101355 / FGSC A1100 / Af293) (Neosartorya fumigata).